Reading from the N-terminus, the 463-residue chain is DDB1- and CUL4-associated factor 12-like protein 1 (463 aa).

The segment at 1–35 (MAQQQTGSRKRKAPAVEADAESSPSQGLAAADGEG) is disordered. WD repeat units follow at residues 87 to 137 (LTER…PLLR), 138 to 184 (DSEA…SLDP), 185 to 252 (LCLG…DVEA), 253 to 297 (IPRA…ALSR), 298 to 341 (LLSI…QQNI), and 342 to 376 (RPLCSREGGTGVRSLSFYRHIITVGTGQGSLLFYD).

Belongs to the WD repeat DCAF12 family.

The chain is DDB1- and CUL4-associated factor 12-like protein 1 (DCAF12L1) from Homo sapiens (Human).